A 446-amino-acid polypeptide reads, in one-letter code: Glucose-6-phosphate isomerase (446 aa).

Glu288 (proton donor) is an active-site residue. Catalysis depends on residues His309 and Lys423.

It belongs to the GPI family.

The protein localises to the cytoplasm. It catalyses the reaction alpha-D-glucose 6-phosphate = beta-D-fructose 6-phosphate. It participates in carbohydrate biosynthesis; gluconeogenesis. It functions in the pathway carbohydrate degradation; glycolysis; D-glyceraldehyde 3-phosphate and glycerone phosphate from D-glucose: step 2/4. Functionally, catalyzes the reversible isomerization of glucose-6-phosphate to fructose-6-phosphate. The polypeptide is Glucose-6-phosphate isomerase (Lactobacillus delbrueckii subsp. bulgaricus (strain ATCC 11842 / DSM 20081 / BCRC 10696 / JCM 1002 / NBRC 13953 / NCIMB 11778 / NCTC 12712 / WDCM 00102 / Lb 14)).